A 467-amino-acid polypeptide reads, in one-letter code: 3-isopropylmalate dehydratase large subunit (467 aa).

[4Fe-4S] cluster is bound by residues cysteine 348, cysteine 409, and cysteine 412. A disordered region spans residues 423-449; it reads NERSISTSNRNFEGRQGKGSRTHLASP.

This sequence belongs to the aconitase/IPM isomerase family. LeuC type 1 subfamily. In terms of assembly, heterodimer of LeuC and LeuD. [4Fe-4S] cluster serves as cofactor.

It carries out the reaction (2R,3S)-3-isopropylmalate = (2S)-2-isopropylmalate. Its pathway is amino-acid biosynthesis; L-leucine biosynthesis; L-leucine from 3-methyl-2-oxobutanoate: step 2/4. Catalyzes the isomerization between 2-isopropylmalate and 3-isopropylmalate, via the formation of 2-isopropylmaleate. In Bifidobacterium longum subsp. infantis (strain ATCC 15697 / DSM 20088 / JCM 1222 / NCTC 11817 / S12), this protein is 3-isopropylmalate dehydratase large subunit.